Reading from the N-terminus, the 523-residue chain is Sugar carrier protein C (523 aa).

Residues 1–25 (MPAVGGIPPSGGNRKVYPGNLTLYV) lie on the Cytoplasmic side of the membrane. The next 12 membrane-spanning stretches (helical) occupy residues 26–46 (TVTC…IGIS), 86–106 (MFTS…STIT), 120–140 (VLFC…MLIL), 143–163 (ILLG…LSEM), 172–192 (LNIG…VLNY), 205–225 (LSLG…LVLP), 298–320 (LTGI…FGSD), 327–347 (VITG…VDKW), 351–371 (FLFL…AACI), 387–407 (WYAV…AWSW), 433–453 (SVNM…LCHL), and 456–476 (GLFI…YYFL). Residues 477–523 (PETKGIPIEEMGQVWKQHWYWSRYVVDEDYPNGGLEMGKEGRIPKNV) are Cytoplasmic-facing.

This sequence belongs to the major facilitator superfamily. Sugar transporter (TC 2.A.1.1) family.

The protein resides in the membrane. The protein is Sugar carrier protein C (STC) of Ricinus communis (Castor bean).